A 481-amino-acid polypeptide reads, in one-letter code: Cytochrome c oxidase subunit 1 (481 aa).

Residues isoleucine 22–isoleucine 42 traverse the membrane as a helical segment. Residues glutamate 45 and glycine 50 each coordinate Ca(2+). A run of 8 helical transmembrane segments spans residues leucine 64–glycine 84, serine 109–glycine 129, phenylalanine 151–isoleucine 171, isoleucine 194–methionine 214, leucine 240–isoleucine 260, methionine 278–valine 298, tyrosine 309–valine 329, and leucine 343–valine 363. Histidine 69 contacts Fe(II)-heme a. Histidine 246 serves as a coordination point for Cu cation. The segment at residues histidine 246 to tyrosine 250 is a cross-link (1'-histidyl-3'-tyrosine (His-Tyr)). Tyrosine 250 provides a ligand contact to O2. Mg(2+)-binding residues include histidine 374 and aspartate 375. Histidine 382 contributes to the heme a3 binding site. 2 helical membrane passes run histidine 382 to isoleucine 402 and isoleucine 420 to phenylalanine 440. Histidine 384 provides a ligand contact to Fe(II)-heme a. Proline 448 provides a ligand contact to Ca(2+). A helical transmembrane segment spans residues phenylalanine 459–isoleucine 479.

This sequence belongs to the heme-copper respiratory oxidase family. As to quaternary structure, component of the cytochrome c oxidase (complex IV, CIV), a multisubunit enzyme composed of a catalytic core of 3 subunits and several supernumerary subunits. The complex exists as a monomer or a dimer and forms supercomplexes (SCs) in the inner mitochondrial membrane with ubiquinol-cytochrome c oxidoreductase (cytochrome b-c1 complex, complex III, CIII). Requires heme as cofactor. Cu cation serves as cofactor.

It is found in the mitochondrion inner membrane. It catalyses the reaction 4 Fe(II)-[cytochrome c] + O2 + 8 H(+)(in) = 4 Fe(III)-[cytochrome c] + 2 H2O + 4 H(+)(out). Its pathway is energy metabolism; oxidative phosphorylation. In terms of biological role, component of the cytochrome c oxidase, the last enzyme in the mitochondrial electron transport chain which drives oxidative phosphorylation. The respiratory chain contains 3 multisubunit complexes succinate dehydrogenase (complex II, CII), ubiquinol-cytochrome c oxidoreductase (cytochrome b-c1 complex, complex III, CIII) and cytochrome c oxidase (complex IV, CIV), that cooperate to transfer electrons derived from NADH and succinate to molecular oxygen, creating an electrochemical gradient over the inner membrane that drives transmembrane transport and the ATP synthase. Cytochrome c oxidase is the component of the respiratory chain that catalyzes the reduction of oxygen to water. Electrons originating from reduced cytochrome c in the intermembrane space (IMS) are transferred via the dinuclear copper A center (CU(A)) of subunit 2 and heme A of subunit 1 to the active site in subunit 1, a binuclear center (BNC) formed by heme A3 and copper B (CU(B)). The BNC reduces molecular oxygen to 2 water molecules using 4 electrons from cytochrome c in the IMS and 4 protons from the mitochondrial matrix. This Theileria parva (East coast fever infection agent) protein is Cytochrome c oxidase subunit 1 (MT-CO1).